The sequence spans 535 residues: Probable lipid II flippase MurJ (535 aa).

The next 12 membrane-spanning stretches (helical) occupy residues 90 to 110 (VLFTVLLLLTIAMELSMPFIV), 131 to 151 (FATIMFPYLACMSLAAMMAGM), 159 to 179 (FAAAIAPVFLNFILIAVLAYA), 192 to 212 (DLSWGVLAAGLVQLAIVWVAV), 233 to 253 (LLVLALPAAITGGITQINLLI), 274 to 294 (IYQLPLGVVGIAVATVLLPEL), 316 to 336 (FTLFLTLPAAAALLVMSEPIV), 350 to 370 (TVVVGHILAIYGLGLPAFVLI), 388 to 408 (IFAGISVAVNVSLALTLFPSL), 413 to 433 (IATAEIVAGWVNALLLFATLV), 451 to 471 (LVIAAAIMAAALYVAVDWLAF), and 484 to 504 (LTLCGLIAAAMAIYFAVAFGI).

This sequence belongs to the MurJ/MviN family.

It is found in the cell inner membrane. It participates in cell wall biogenesis; peptidoglycan biosynthesis. Involved in peptidoglycan biosynthesis. Transports lipid-linked peptidoglycan precursors from the inner to the outer leaflet of the cytoplasmic membrane. The polypeptide is Probable lipid II flippase MurJ (Rhizobium meliloti (strain 1021) (Ensifer meliloti)).